We begin with the raw amino-acid sequence, 589 residues long: MASEIHMSEPMCLIENTEAQLVINQEALRILSAITQPVVVVAIVGLYRTGKSYLMNKLAGKRTGFSLGSTVQSHTKGIWMWCVPHPKKAGQTLVLLDTEGLEDVEKGDNQNDCWIFALAVLLSSTFIYNSIGTINQQAMDQLHYVTELTDLIKSKSSPDQSDVDNSANFVGFFPIFVWTLRDFSLDLEFDGESITPDEYLETSLALRKGTDENTKKFNMPRLCIRKFFPKRKCFIFDRPGDRKQLSKLEWIQEDQLNKEFVEQVAEFTSYIFSYSGVKTLSGGITVNGPRLKSLVQTYVSAICSGELPCMENAVLTLAQIENSAAVQKAITYYEEQMNQKIHMPTETLQELLDLHRTCEREAIEVFMKNSFKDVDQKFQEELGAQLEAKRDAFVKKNMDMSSAHCSDLLEGLFAHLEEEVKQGTFYKPGGYYLFLQRKQELEKKYIQTPGKGLQAEVMLRKYFESKEDLADTLLKMDQSLTEKEKQIEMERIKAEAAEAANRALAEMQKKHEMLMEQKEQSYQEHMKQLTEKMEQERKELMAEQQRIISLKLQEQERLLKQGFQNESLQLRQEIEKIKNMPPPRSCTIL.

Residues methionine 1–cysteine 309 form a GTPase domain (Globular) region. The region spanning threonine 35 to glycine 276 is the GB1/RHD3-type G domain. GTP contacts are provided by residues tyrosine 47–tyrosine 53, leucine 67–serine 69, and aspartate 97–leucine 101. At serine 156 the chain carries Phosphoserine. Position 586 is a cysteine methyl ester (cysteine 586). Cysteine 586 carries S-farnesyl cysteine lipidation. Cysteine 586 is lipidated: S-geranylgeranyl cysteine; partial. Position 587 is a phosphothreonine (threonine 587). Positions threonine 587–leucine 589 are cleaved as a propeptide — removed in mature form.

The protein belongs to the TRAFAC class dynamin-like GTPase superfamily. GB1/RHD3 GTPase family. GB1 subfamily. Homodimer; homodimerization occurs upon GTP-binding and is required for the second hydrolysis step from GDP to GMP. Undergoes conformational changes and oligomerization upon GTP-binding and hydrolysis. Heterodimer with other family members, including GBP2, GBP3, GBP4 and GBP5. Dimerization regulates subcellular location to membranous structures. Interacts with SQSTM1. Interacts (when phosphorylated) with 14-3-3 protein sigma (SFN); leading to GBP1 retention in the cytosol and inactivation. Post-translationally, isoprenylation of mouse GBP1 is incomplete. It persistently exists in the cell as a mixture of C20-modified and (more predominantly) unmodified form. Isoprenylation is required for proper subcellular location. Phosphorylated at Ser-156 by PIM1 in absence of infection, inhibits GBP1: phosphorylation promotes interaction with 14-3-3 protein sigma (SFN), leading to GBP1 retention in the cytosol. Dephosphorylated in response to infection, liberating GBP1.

Its subcellular location is the cytoplasmic vesicle membrane. It localises to the golgi apparatus membrane. The protein localises to the cell membrane. The protein resides in the cytoplasm. It is found in the cytosol. Its subcellular location is the secreted. The catalysed reaction is GTP + H2O = GDP + phosphate + H(+). It carries out the reaction GDP + H2O = GMP + phosphate + H(+). In terms of biological role, interferon (IFN)-inducible GTPase that plays important roles in innate immunity against a diverse range of bacterial, viral and protozoan pathogens. Hydrolyzes GTP to GMP in two consecutive cleavage reactions: GTP is first hydrolyzed to GDP and then to GMP in a processive manner. Following infection, recruited to the pathogen-containing vacuoles or vacuole-escaped bacteria and promotes both inflammasome assembly and autophagy. Acts as a positive regulator of inflammasome assembly by facilitating the detection of inflammasome ligands from pathogens. Involved in the lysis of pathogen-containing vacuoles, releasing pathogens into the cytosol. Following pathogen release in the cytosol, forms a protein coat in a GTPase-dependent manner that encapsulates pathogens and promotes the detection of ligands by pattern recognition receptors. Plays a key role in inflammasome assembly in response to infection by Gram-negative bacteria: following pathogen release in the cytosol, forms a protein coat that encapsulates Gram-negative bacteria and directly binds to lipopolysaccharide (LPS), disrupting the O-antigen barrier and unmasking lipid A that is that detected by the non-canonical inflammasome effector CASP4/CASP11. Also promotes recruitment of proteins that mediate bacterial cytolysis, leading to release double-stranded DNA (dsDNA) that activates the AIM2 inflammasome. Involved in autophagy by regulating bacteriolytic peptide generation via its interaction with ubiquitin-binding protein SQSTM1, which delivers monoubiquitinated proteins to autolysosomes for the generation of bacteriolytic peptides. Confers protection to several pathogens, including the bacterial pathogens L.monocytogenes and M.bovis BCG as well as the protozoan pathogen T.gondii. Exhibits antiviral activity against influenza virus. This chain is Guanylate-binding protein 1 (Gbp1), found in Mus musculus (Mouse).